The following is a 283-amino-acid chain: Lipoyl synthase (283 aa).

[4Fe-4S] cluster is bound by residues cysteine 35, cysteine 40, cysteine 46, cysteine 61, cysteine 65, cysteine 68, and serine 273. The Radical SAM core domain maps to 47 to 262 (FRERQATFLI…RAAALATGFA (216 aa)).

Belongs to the radical SAM superfamily. Lipoyl synthase family. [4Fe-4S] cluster serves as cofactor.

The protein resides in the cytoplasm. It catalyses the reaction [[Fe-S] cluster scaffold protein carrying a second [4Fe-4S](2+) cluster] + N(6)-octanoyl-L-lysyl-[protein] + 2 oxidized [2Fe-2S]-[ferredoxin] + 2 S-adenosyl-L-methionine + 4 H(+) = [[Fe-S] cluster scaffold protein] + N(6)-[(R)-dihydrolipoyl]-L-lysyl-[protein] + 4 Fe(3+) + 2 hydrogen sulfide + 2 5'-deoxyadenosine + 2 L-methionine + 2 reduced [2Fe-2S]-[ferredoxin]. The protein operates within protein modification; protein lipoylation via endogenous pathway; protein N(6)-(lipoyl)lysine from octanoyl-[acyl-carrier-protein]: step 2/2. Its function is as follows. Catalyzes the radical-mediated insertion of two sulfur atoms into the C-6 and C-8 positions of the octanoyl moiety bound to the lipoyl domains of lipoate-dependent enzymes, thereby converting the octanoylated domains into lipoylated derivatives. The polypeptide is Lipoyl synthase (Geobacter metallireducens (strain ATCC 53774 / DSM 7210 / GS-15)).